Here is a 267-residue protein sequence, read N- to C-terminus: Phosphate import ATP-binding protein PstB 2 (267 aa).

The region spanning 21–262 (LSTKDVHVYY…AKLQSTNDYV (242 aa)) is the ABC transporter domain. 53–60 (GPSGSGKS) provides a ligand contact to ATP.

This sequence belongs to the ABC transporter superfamily. Phosphate importer (TC 3.A.1.7) family. As to quaternary structure, the complex is composed of two ATP-binding proteins (PstB), two transmembrane proteins (PstC and PstA) and a solute-binding protein (PstS).

The protein localises to the cell membrane. The catalysed reaction is phosphate(out) + ATP + H2O = ADP + 2 phosphate(in) + H(+). In terms of biological role, part of the ABC transporter complex PstSACB involved in phosphate import. Responsible for energy coupling to the transport system. This is Phosphate import ATP-binding protein PstB 2 from Streptococcus pneumoniae (strain ATCC BAA-255 / R6).